Consider the following 122-residue polypeptide: Large ribosomal subunit protein bL12 (122 aa).

It belongs to the bacterial ribosomal protein bL12 family. In terms of assembly, homodimer. Part of the ribosomal stalk of the 50S ribosomal subunit. Forms a multimeric L10(L12)X complex, where L10 forms an elongated spine to which 2 to 4 L12 dimers bind in a sequential fashion. Binds GTP-bound translation factors.

Forms part of the ribosomal stalk which helps the ribosome interact with GTP-bound translation factors. Is thus essential for accurate translation. The protein is Large ribosomal subunit protein bL12 of Xylella fastidiosa (strain 9a5c).